Reading from the N-terminus, the 205-residue chain is MTLYDKEINKNSLLIPMVIEKTSYGERSYDIYSRLLKERIIFLTGTIDDNTANLIVAQMLFLEAENAKQDIYIYINSPGGVITAGMSIYDTMKFIKPNVNTICIGQACSMAALILTAGKKGYRYCLPNSRIMIHQPIGGYNGQASDIEIHAKEIIKVKRKLNELMAFHTSQSINTIEKDTERDCFLSANQAIKYGLIDTILSYRT.

The Nucleophile role is filled by S109. H134 is a catalytic residue.

The protein belongs to the peptidase S14 family. In terms of assembly, fourteen ClpP subunits assemble into 2 heptameric rings which stack back to back to give a disk-like structure with a central cavity, resembling the structure of eukaryotic proteasomes.

The protein localises to the cytoplasm. It carries out the reaction Hydrolysis of proteins to small peptides in the presence of ATP and magnesium. alpha-casein is the usual test substrate. In the absence of ATP, only oligopeptides shorter than five residues are hydrolyzed (such as succinyl-Leu-Tyr-|-NHMec, and Leu-Tyr-Leu-|-Tyr-Trp, in which cleavage of the -Tyr-|-Leu- and -Tyr-|-Trp bonds also occurs).. Cleaves peptides in various proteins in a process that requires ATP hydrolysis. Has a chymotrypsin-like activity. Plays a major role in the degradation of misfolded proteins. The chain is ATP-dependent Clp protease proteolytic subunit from Buchnera aphidicola subsp. Baizongia pistaciae (strain Bp).